A 110-amino-acid chain; its full sequence is Large ribosomal subunit protein uL22 (110 aa).

The protein belongs to the universal ribosomal protein uL22 family. As to quaternary structure, part of the 50S ribosomal subunit.

This protein binds specifically to 23S rRNA; its binding is stimulated by other ribosomal proteins, e.g. L4, L17, and L20. It is important during the early stages of 50S assembly. It makes multiple contacts with different domains of the 23S rRNA in the assembled 50S subunit and ribosome. Functionally, the globular domain of the protein is located near the polypeptide exit tunnel on the outside of the subunit, while an extended beta-hairpin is found that lines the wall of the exit tunnel in the center of the 70S ribosome. The sequence is that of Large ribosomal subunit protein uL22 from Shewanella denitrificans (strain OS217 / ATCC BAA-1090 / DSM 15013).